The sequence spans 322 residues: 4-diphosphocytidyl-2-C-methyl-D-erythritol kinase (322 aa).

Lysine 27 is an active-site residue. An ATP-binding site is contributed by 112–122; that stretch reads PVAGGMAGGSA. Aspartate 154 is an active-site residue.

This sequence belongs to the GHMP kinase family. IspE subfamily.

The enzyme catalyses 4-CDP-2-C-methyl-D-erythritol + ATP = 4-CDP-2-C-methyl-D-erythritol 2-phosphate + ADP + H(+). It functions in the pathway isoprenoid biosynthesis; isopentenyl diphosphate biosynthesis via DXP pathway; isopentenyl diphosphate from 1-deoxy-D-xylulose 5-phosphate: step 3/6. Its function is as follows. Catalyzes the phosphorylation of the position 2 hydroxy group of 4-diphosphocytidyl-2C-methyl-D-erythritol. The chain is 4-diphosphocytidyl-2-C-methyl-D-erythritol kinase from Mycolicibacterium smegmatis (strain ATCC 700084 / mc(2)155) (Mycobacterium smegmatis).